Consider the following 135-residue polypeptide: Nucleoside diphosphate kinase (135 aa).

ATP contacts are provided by Lys-11, Phe-59, Arg-87, Thr-93, Arg-104, and Asn-114. His-117 acts as the Pros-phosphohistidine intermediate in catalysis.

This sequence belongs to the NDK family. As to quaternary structure, homotetramer. Requires Mg(2+) as cofactor.

The protein resides in the cytoplasm. It catalyses the reaction a 2'-deoxyribonucleoside 5'-diphosphate + ATP = a 2'-deoxyribonucleoside 5'-triphosphate + ADP. The catalysed reaction is a ribonucleoside 5'-diphosphate + ATP = a ribonucleoside 5'-triphosphate + ADP. Its function is as follows. Major role in the synthesis of nucleoside triphosphates other than ATP. The ATP gamma phosphate is transferred to the NDP beta phosphate via a ping-pong mechanism, using a phosphorylated active-site intermediate. The polypeptide is Nucleoside diphosphate kinase (Marinomonas sp. (strain MWYL1)).